We begin with the raw amino-acid sequence, 236 residues long: Octanoyltransferase (236 aa).

The region spanning 36–220 is the BPL/LPL catalytic domain; sequence DQVPDTVLLL…HLAAVLGASS (185 aa). Substrate-binding positions include 76 to 83, 150 to 152, and 163 to 165; these read RGGKITWH, AIG, and GFA. Cys181 acts as the Acyl-thioester intermediate in catalysis.

This sequence belongs to the LipB family.

It is found in the cytoplasm. The enzyme catalyses octanoyl-[ACP] + L-lysyl-[protein] = N(6)-octanoyl-L-lysyl-[protein] + holo-[ACP] + H(+). It functions in the pathway protein modification; protein lipoylation via endogenous pathway; protein N(6)-(lipoyl)lysine from octanoyl-[acyl-carrier-protein]: step 1/2. Its function is as follows. Catalyzes the transfer of endogenously produced octanoic acid from octanoyl-acyl-carrier-protein onto the lipoyl domains of lipoate-dependent enzymes. Lipoyl-ACP can also act as a substrate although octanoyl-ACP is likely to be the physiological substrate. The protein is Octanoyltransferase of Thermobifida fusca (strain YX).